Reading from the N-terminus, the 230-residue chain is UPF0173 metal-dependent hydrolase OEOE_1287 (230 aa).

The protein belongs to the UPF0173 family.

The polypeptide is UPF0173 metal-dependent hydrolase OEOE_1287 (Oenococcus oeni (strain ATCC BAA-331 / PSU-1)).